The sequence spans 583 residues: ATP-dependent lipid A-core flippase (583 aa).

The next 7 helical transmembrane spans lie at 18 to 38 (LWPI…TLII), 65 to 85 (IFMW…MSGF), 105 to 127 (LLFN…ATLM), 143 to 163 (GALI…IMMF), 167 to 187 (WQLS…IKLV), 252 to 272 (VFEP…LYIA), and 277 to 297 (VIEM…IALM). An ABC transmembrane type-1 domain is found at 30-312 (IIASITLIIN…LTNVSAQFQR (283 aa)). One can recognise an ABC transporter domain in the interval 344–580 (IIFDNVTFFY…KGVYSQLYKF (237 aa)). 378-385 (GRSGSGKS) is an ATP binding site.

Belongs to the ABC transporter superfamily. Lipid exporter (TC 3.A.1.106) family. In terms of assembly, homodimer.

It localises to the cell inner membrane. It carries out the reaction ATP + H2O + lipid A-core oligosaccharideSide 1 = ADP + phosphate + lipid A-core oligosaccharideSide 2.. Functionally, involved in lipopolysaccharide (LPS) biosynthesis. Translocates lipid A-core from the inner to the outer leaflet of the inner membrane. Transmembrane domains (TMD) form a pore in the inner membrane and the ATP-binding domain (NBD) is responsible for energy generation. The chain is ATP-dependent lipid A-core flippase from Blochmanniella floridana.